The sequence spans 296 residues: MAGPLQGGGARALDLLRGLPRVSLANLKPNPGSKKPERRPRGRRRGRKCGRGHKGERQRGTRPRLGFEGGQTPFYIRIPKYGFNEGHSFRRQYKPLSLNRLQYLIDLGRVDPSQPIDLTQLVNGRGVTIQPLKRDYGVQLVEEGADTFTAKVNIEVQLASELAIAAIEKNGGVVTTAFYDPRSLDIVCKPVPFFLRGQPIPKRMLPPEELVPYYTDAKNRGYLADPAKFPEARLELARKYGYILPDITKDELFKMLCTRKDPRQIFFGLAPGWVVNMADKKILKPTDENLLKYYTS.

A mitochondrion-targeting transit peptide spans 1-21 (MAGPLQGGGARALDLLRGLPR). The segment at 22–66 (VSLANLKPNPGSKKPERRPRGRRRGRKCGRGHKGERQRGTRPRLG) is disordered. Residues 36-52 (PERRPRGRRRGRKCGRG) show a composition bias toward basic residues.

Belongs to the universal ribosomal protein uL15 family. Component of the mitochondrial large ribosomal subunit (mt-LSU). Mature mammalian 55S mitochondrial ribosomes consist of a small (28S) and a large (39S) subunit. The 28S small subunit contains a 12S ribosomal RNA (12S mt-rRNA) and 30 different proteins. The 39S large subunit contains a 16S rRNA (16S mt-rRNA), a copy of mitochondrial valine transfer RNA (mt-tRNA(Val)), which plays an integral structural role, and 52 different proteins.

It localises to the mitochondrion. The polypeptide is Large ribosomal subunit protein uL15m (MRPL15) (Homo sapiens (Human)).